We begin with the raw amino-acid sequence, 283 residues long: Adenylate dimethylallyltransferase (283 aa).

It belongs to the isopentenyl transferase family.

It carries out the reaction dimethylallyl diphosphate + AMP = N(6)-(dimethylallyl)adenosine 5'-phosphate + diphosphate. Functionally, transfers dimethylallyl groups to AMP as part of the biosynthesis of cytokinin phytohormones like isopentenyl adenine or discadenine which controle spore formation and viability. In Dictyostelium discoideum (Social amoeba), this protein is Adenylate dimethylallyltransferase (iptA).